A 255-amino-acid polypeptide reads, in one-letter code: Adenylate dimethylallyltransferase (255 aa).

The protein belongs to the isopentenyl transferase family.

It carries out the reaction dimethylallyl diphosphate + AMP = N(6)-(dimethylallyl)adenosine 5'-phosphate + diphosphate. Transfers dimethylallyl groups to AMP as part of the biosynthesis of cytokinin phytohormones. This chain is Adenylate dimethylallyltransferase (fas4), found in Rhodococcoides fascians (Rhodococcus fascians).